Reading from the N-terminus, the 372-residue chain is Anhydro-N-acetylmuramic acid kinase (372 aa).

Gly-21–Asp-28 serves as a coordination point for ATP.

Belongs to the anhydro-N-acetylmuramic acid kinase family.

It catalyses the reaction 1,6-anhydro-N-acetyl-beta-muramate + ATP + H2O = N-acetyl-D-muramate 6-phosphate + ADP + H(+). The protein operates within amino-sugar metabolism; 1,6-anhydro-N-acetylmuramate degradation. It participates in cell wall biogenesis; peptidoglycan recycling. Functionally, catalyzes the specific phosphorylation of 1,6-anhydro-N-acetylmuramic acid (anhMurNAc) with the simultaneous cleavage of the 1,6-anhydro ring, generating MurNAc-6-P. Is required for the utilization of anhMurNAc either imported from the medium or derived from its own cell wall murein, and thus plays a role in cell wall recycling. In Bordetella avium (strain 197N), this protein is Anhydro-N-acetylmuramic acid kinase.